The sequence spans 363 residues: LIM and cysteine-rich domains protein 1 (363 aa).

The residue at position 16 (S16) is a Phosphoserine. The region spanning 99–206 (MIMTNPIATG…GEVALPGQGG (108 aa)) is the PET domain. The interval 200–233 (ALPGQGGLPKEEGKQQEKPEGAETAAPTANGSLG) is disordered. Residues 208–220 (PKEEGKQQEKPEG) show a composition bias toward basic and acidic residues. 2 consecutive LIM zinc-binding domains span residues 239 to 304 (YVCE…SLRP) and 305 to 363 (RCSG…SKRT).

As to quaternary structure, interacts with beta-dystroglycan. Interacts with GATA1, GATA4 and GATA6. Highly expressed in both skeletal muscle and cardiac muscle.

The protein resides in the cytoplasm. It is found in the nucleus. Transcriptional cofactor that restricts GATA6 function by inhibiting DNA-binding, resulting in repression of GATA6 transcriptional activation of downstream target genes. Represses GATA6-mediated trans activation of lung- and cardiac tissue-specific promoters. Inhibits DNA-binding by GATA4 and GATA1 to the cTNC promoter. Plays a critical role in the development of cardiac hypertrophy via activation of calcineurin/nuclear factor of activated T-cells signaling pathway. The protein is LIM and cysteine-rich domains protein 1 (LMCD1) of Sus scrofa (Pig).